The sequence spans 140 residues: ATP synthase epsilon chain (140 aa).

The protein belongs to the ATPase epsilon chain family. F-type ATPases have 2 components, CF(1) - the catalytic core - and CF(0) - the membrane proton channel. CF(1) has five subunits: alpha(3), beta(3), gamma(1), delta(1), epsilon(1). CF(0) has three main subunits: a, b and c.

Its subcellular location is the cell inner membrane. In terms of biological role, produces ATP from ADP in the presence of a proton gradient across the membrane. This is ATP synthase epsilon chain from Sodalis glossinidius (strain morsitans).